The chain runs to 194 residues: Peptidyl-tRNA hydrolase (194 aa).

Residue Tyr-17 coordinates tRNA. His-22 acts as the Proton acceptor in catalysis. TRNA contacts are provided by Tyr-68, Asn-70, and Asn-116.

Belongs to the PTH family. Monomer.

The protein resides in the cytoplasm. The catalysed reaction is an N-acyl-L-alpha-aminoacyl-tRNA + H2O = an N-acyl-L-amino acid + a tRNA + H(+). Its function is as follows. Hydrolyzes ribosome-free peptidyl-tRNAs (with 1 or more amino acids incorporated), which drop off the ribosome during protein synthesis, or as a result of ribosome stalling. In terms of biological role, catalyzes the release of premature peptidyl moieties from peptidyl-tRNA molecules trapped in stalled 50S ribosomal subunits, and thus maintains levels of free tRNAs and 50S ribosomes. In Azotobacter vinelandii (strain DJ / ATCC BAA-1303), this protein is Peptidyl-tRNA hydrolase.